The following is a 420-amino-acid chain: Caspase-12 (420 aa).

The 92-residue stretch at 1–92 (MAAKRTHERD…QLSLQFPSDD (92 aa)) folds into the CARD domain. 2 positions are modified to phosphoserine: S85 and S90. The disordered stretch occupies residues 93–115 (EEDELQKMFTPSSASESRGKVED). Active-site residues include H251 and C299.

The protein belongs to the peptidase C14A family. As to quaternary structure, heterotetramer that consists of two anti-parallel arranged heterodimers, each one formed by two subunits (Potential). May interact with TRAF2.

Functionally, involved in the activation cascade of caspases responsible for apoptosis execution. The protein is Caspase-12 (Casp12) of Rattus norvegicus (Rat).